A 1355-amino-acid chain; its full sequence is MTNEKMIFRNRVVDKGQLRNLISWAFTHYGTARTAVMADKLKDLGFRYATRAGVSISVDDLMVPPSKRSLLEAAEEEIRATEVRYQRGEITEVERFQKVIDTWNGTSEALKDEVVTHFKQTNPLNSVYMMAFSGARGNISQVRQLVGMRGLMADPQGEIIDLPIKTNFREGLTVTEYIISSYGARKGLVDTALRTADSGYLTRRLVDVSQDVIIREIDCGTTRGIPVRPMTEGSKTLIKLSTRLLGRVVGEDVIHPKTKEVIAPRNTPISDDLAKEIEKAGVAEVVVRSPLTCEAARSVCQHCYGWSLAHAKMVDLGEAVGIIAAQSIGEPGTQLTMRTFHTGGVFTGEVAQQVRSKMDGTIKLPRKLRTRTHRTRHGEDALFVESNGIMILEPRKEGSETPAPQEIHVTQGSTIYIVDGQQVKKGQLLAEVALGGRTTRTNTEKAVKDVASDLAGEVKFAEVVPEQKTDRQGNTTTTAARGGLIWILSGEVYNLPPGAELVVKNGDRVETNGVLAETKLTTIHGGVVRLPEATPGKSTREIEIITASVVLDQATVTVQSSQGRNNYLITTGNNQVFNLRATPGTKVQNGQVVAELIDDRYRTTTGGFLKFAGVEVQKKGKAKLGYEVVQGGTLLWIPEETHEVNKDISLLLVEDGQYVEAGTEVVKDIFCQNSGVVEVTQKNDILREVVVKPGELLMVDDPEAVIGRDNTLLQPGEELLGQVATELRYIQYVESPEGPALLSRPVVEFAVPSNPDVPSTTSVSQQTGRSIQMRAVQRLPYKDSERVKSVEGVELLRTQLVLEIEQEGEQEHNASPLAADIELIPDLEDADVQRLQLVILESLVLRRDIAADATQGSTQTSLEVKDGDTIVPGSVVARTQILSKEGGIVRGVQKGSEAVRRCLVLRHSDMATLNISAKPKVKAGDLIVAGTELAPGIFAEESGQIVGVKNAGESTTTQDAALSTQNYAVTIRAGRPYRVSPGAVLQIEDGDLVQRGDNLVLLVFERAKTGDIIQGLPRIEELLEARKPKEACILAKRGGEVKVVYGDGDEAIAIKVIESNGVVTDYPLGPGQNLAMPDGSVVPAGQPLSDGPSNPHEILEVFFSLGSEDGVYACASHALQKVQTFLVNEVQMVYQSQGIDIADKHIEVIVRQMTNKVRIDDGGDTTMLPGELVELRQVEQVNEAMAITGGARAQYTPVLLGITKASLNTDSFISAASFQETTRVLTEAAIEGKSDWLRGLKENVIIGRLIPAGTGYNTYDEPGMLEDYSTLETTSVLDETDDPLDMVLDDRTARAYNLDSPGLAETGFNNRRSILDDDELIADEIHDLVEAEVEVDDEVDDDYEDDDEDDDDYED.

Positions 219, 293, 300, and 303 each coordinate Zn(2+). A disordered region spans residues 1331-1355 (AEVEVDDEVDDDYEDDDEDDDDYED).

The protein belongs to the RNA polymerase beta' chain family. RpoC2 subfamily. In terms of assembly, in cyanobacteria the RNAP catalytic core is composed of 2 alpha, 1 beta, 1 beta', 1 gamma and 1 omega subunit. When a sigma factor is associated with the core the holoenzyme is formed, which can initiate transcription. Requires Zn(2+) as cofactor.

It carries out the reaction RNA(n) + a ribonucleoside 5'-triphosphate = RNA(n+1) + diphosphate. Functionally, DNA-dependent RNA polymerase catalyzes the transcription of DNA into RNA using the four ribonucleoside triphosphates as substrates. The chain is DNA-directed RNA polymerase subunit beta' from Nostoc sp. (strain PCC 7120 / SAG 25.82 / UTEX 2576).